The chain runs to 449 residues: UDP-N-acetylmuramoylalanine--D-glutamate ligase (449 aa).

ATP is bound at residue 118–124 (GTNGKTT).

This sequence belongs to the MurCDEF family.

Its subcellular location is the cytoplasm. The enzyme catalyses UDP-N-acetyl-alpha-D-muramoyl-L-alanine + D-glutamate + ATP = UDP-N-acetyl-alpha-D-muramoyl-L-alanyl-D-glutamate + ADP + phosphate + H(+). It functions in the pathway cell wall biogenesis; peptidoglycan biosynthesis. In terms of biological role, cell wall formation. Catalyzes the addition of glutamate to the nucleotide precursor UDP-N-acetylmuramoyl-L-alanine (UMA). The protein is UDP-N-acetylmuramoylalanine--D-glutamate ligase of Staphylococcus aureus (strain Mu3 / ATCC 700698).